Consider the following 161-residue polypeptide: MKISRIFKTIFLLDFLGGLNIAIKEIFKSKKTINYPFEKGKISPRFRGEHALRRYPNGEERCIACKLCEAVCPAQAITIESSERADGSRKTTRYDIDMMKCIYCGLCEESCPVDAIVQGPNFEFSTETREELYYNKEKLLDNGDRWENVLAANIKADNSHR.

2 4Fe-4S ferredoxin-type domains span residues 52-82 (LRRY…IESS) and 92-121 (TRYD…QGPN). [4Fe-4S] cluster is bound by residues Cys-62, Cys-65, Cys-68, Cys-72, Cys-101, Cys-104, Cys-107, and Cys-111.

The protein belongs to the complex I 23 kDa subunit family. In terms of assembly, NDH-1 is composed of 14 different subunits. Subunits NuoA, H, J, K, L, M, N constitute the membrane sector of the complex. The cofactor is [4Fe-4S] cluster.

It is found in the cell inner membrane. It catalyses the reaction a quinone + NADH + 5 H(+)(in) = a quinol + NAD(+) + 4 H(+)(out). In terms of biological role, NDH-1 shuttles electrons from NADH, via FMN and iron-sulfur (Fe-S) centers, to quinones in the respiratory chain. The immediate electron acceptor for the enzyme in this species is believed to be ubiquinone. Couples the redox reaction to proton translocation (for every two electrons transferred, four hydrogen ions are translocated across the cytoplasmic membrane), and thus conserves the redox energy in a proton gradient. In Pelagibacter ubique (strain HTCC1062), this protein is NADH-quinone oxidoreductase subunit I.